The primary structure comprises 229 residues: 2-C-methyl-D-erythritol 4-phosphate cytidylyltransferase (229 aa).

The protein belongs to the IspD/TarI cytidylyltransferase family. IspD subfamily.

The catalysed reaction is 2-C-methyl-D-erythritol 4-phosphate + CTP + H(+) = 4-CDP-2-C-methyl-D-erythritol + diphosphate. It functions in the pathway isoprenoid biosynthesis; isopentenyl diphosphate biosynthesis via DXP pathway; isopentenyl diphosphate from 1-deoxy-D-xylulose 5-phosphate: step 2/6. Catalyzes the formation of 4-diphosphocytidyl-2-C-methyl-D-erythritol from CTP and 2-C-methyl-D-erythritol 4-phosphate (MEP). This is 2-C-methyl-D-erythritol 4-phosphate cytidylyltransferase from Bacillus pumilus (strain SAFR-032).